We begin with the raw amino-acid sequence, 409 residues long: Tryptophan synthase beta chain (409 aa).

Lys-98 is subject to N6-(pyridoxal phosphate)lysine.

Belongs to the TrpB family. Tetramer of two alpha and two beta chains. Requires pyridoxal 5'-phosphate as cofactor.

The catalysed reaction is (1S,2R)-1-C-(indol-3-yl)glycerol 3-phosphate + L-serine = D-glyceraldehyde 3-phosphate + L-tryptophan + H2O. Its pathway is amino-acid biosynthesis; L-tryptophan biosynthesis; L-tryptophan from chorismate: step 5/5. The beta subunit is responsible for the synthesis of L-tryptophan from indole and L-serine. In Jannaschia sp. (strain CCS1), this protein is Tryptophan synthase beta chain.